Reading from the N-terminus, the 199-residue chain is Recombination protein RecR (199 aa).

The C4-type zinc-finger motif lies at 57–72 (CSICGNITEDDPCVIC). The Toprim domain maps to 80–176 (STVLVVEEAK…KVTRLAHGLS (97 aa)).

Belongs to the RecR family.

Its function is as follows. May play a role in DNA repair. It seems to be involved in an RecBC-independent recombinational process of DNA repair. It may act with RecF and RecO. The protein is Recombination protein RecR of Lactiplantibacillus plantarum (strain ATCC BAA-793 / NCIMB 8826 / WCFS1) (Lactobacillus plantarum).